Here is a 117-residue protein sequence, read N- to C-terminus: NADH-quinone oxidoreductase subunit A (117 aa).

3 consecutive transmembrane segments (helical) span residues 4–24, 64–84, and 86–106; these read WIGV…GMLT, LMFV…VSFV, and LGLA…LGLW.

This sequence belongs to the complex I subunit 3 family. In terms of assembly, NDH-1 is composed of 14 different subunits. Subunits NuoA, H, J, K, L, M, N constitute the membrane sector of the complex.

It is found in the cell membrane. The enzyme catalyses a quinone + NADH + 5 H(+)(in) = a quinol + NAD(+) + 4 H(+)(out). NDH-1 shuttles electrons from NADH, via FMN and iron-sulfur (Fe-S) centers, to quinones in the respiratory chain. The immediate electron acceptor for the enzyme in this species is believed to be a menaquinone. Couples the redox reaction to proton translocation (for every two electrons transferred, four hydrogen ions are translocated across the cytoplasmic membrane), and thus conserves the redox energy in a proton gradient. This is NADH-quinone oxidoreductase subunit A from Desulforamulus reducens (strain ATCC BAA-1160 / DSM 100696 / MI-1) (Desulfotomaculum reducens).